Consider the following 76-residue polypeptide: EMBRYO SURROUNDING FACTOR 1-like protein 8 (76 aa).

An N-terminal signal peptide occupies residues 1-22 (MSSSQFFILCIILISSFPLHEC). Cystine bridges form between Cys-38/Cys-54, Cys-43/Cys-74, Cys-52/Cys-70, and Cys-55/Cys-63.

It belongs to the MEG family. Expressed in flowers.

The chain is EMBRYO SURROUNDING FACTOR 1-like protein 8 (ESFL8) from Arabidopsis thaliana (Mouse-ear cress).